We begin with the raw amino-acid sequence, 299 residues long: Probable endonuclease 4 (299 aa).

Residues H69, H110, E145, D179, H182, H214, D227, H229, and E259 each contribute to the Zn(2+) site.

Belongs to the AP endonuclease 2 family. Zn(2+) is required as a cofactor.

It catalyses the reaction Endonucleolytic cleavage to 5'-phosphooligonucleotide end-products.. Functionally, endonuclease IV plays a role in DNA repair. It cleaves phosphodiester bonds at apurinic or apyrimidinic (AP) sites, generating a 3'-hydroxyl group and a 5'-terminal sugar phosphate. The polypeptide is Probable endonuclease 4 (Geobacillus kaustophilus (strain HTA426)).